The primary structure comprises 485 residues: Cysteine--tRNA ligase (485 aa).

A Zn(2+)-binding site is contributed by C27. Residues I29 to H39 carry the 'HIGH' region motif. C208, H233, and E237 together coordinate Zn(2+). Residues K265 to S269 carry the 'KMSKS' region motif. K268 lines the ATP pocket.

The protein belongs to the class-I aminoacyl-tRNA synthetase family. Monomer. Zn(2+) serves as cofactor.

It localises to the cytoplasm. The enzyme catalyses tRNA(Cys) + L-cysteine + ATP = L-cysteinyl-tRNA(Cys) + AMP + diphosphate. In Nitratidesulfovibrio vulgaris (strain ATCC 29579 / DSM 644 / CCUG 34227 / NCIMB 8303 / VKM B-1760 / Hildenborough) (Desulfovibrio vulgaris), this protein is Cysteine--tRNA ligase.